We begin with the raw amino-acid sequence, 332 residues long: Phosphate acyltransferase (332 aa).

This sequence belongs to the PlsX family. As to quaternary structure, homodimer. Probably interacts with PlsY.

It is found in the cytoplasm. The enzyme catalyses a fatty acyl-[ACP] + phosphate = an acyl phosphate + holo-[ACP]. It functions in the pathway lipid metabolism; phospholipid metabolism. Its function is as follows. Catalyzes the reversible formation of acyl-phosphate (acyl-PO(4)) from acyl-[acyl-carrier-protein] (acyl-ACP). This enzyme utilizes acyl-ACP as fatty acyl donor, but not acyl-CoA. In Streptococcus mutans serotype c (strain ATCC 700610 / UA159), this protein is Phosphate acyltransferase.